The chain runs to 655 residues: p-hydroxybenzoic acid efflux pump subunit AaeB (655 aa).

Residues M1–R12 are Periplasmic-facing. Residues F13 to L33 form a helical membrane-spanning segment. The Cytoplasmic portion of the chain corresponds to E34 to R37. A helical transmembrane segment spans residues W38–P58. The Periplasmic segment spans residues Y59–M68. Residues L69–I89 traverse the membrane as a helical segment. Residues R90 to P92 lie on the Cytoplasmic side of the membrane. Residues L93–V113 form a helical membrane-spanning segment. Over R114–A120 the chain is Periplasmic. Residues W121–L141 traverse the membrane as a helical segment. Topologically, residues T142–S151 are cytoplasmic. Residues E152 to I172 traverse the membrane as a helical segment. Residues K173–T369 lie on the Periplasmic side of the membrane. Residues L370–V390 traverse the membrane as a helical segment. At T391 to D406 the chain is on the cytoplasmic side. Residues F407 to P427 form a helical membrane-spanning segment. Topologically, residues N428–Q430 are periplasmic. Residues Q431–V451 traverse the membrane as a helical segment. At Q452–S458 the chain is on the cytoplasmic side. The helical transmembrane segment at M459–F479 threads the bilayer. Over S480–Q481 the chain is Periplasmic. A helical transmembrane segment spans residues F482–L502. The Cytoplasmic portion of the chain corresponds to V503–S655.

Belongs to the aromatic acid exporter ArAE (TC 2.A.85) family.

It is found in the cell inner membrane. Functionally, forms an efflux pump with AaeA. Could function as a metabolic relief valve, allowing to eliminate certain compounds when they accumulate to high levels in the cell. In Salmonella paratyphi A (strain ATCC 9150 / SARB42), this protein is p-hydroxybenzoic acid efflux pump subunit AaeB.